A 397-amino-acid chain; its full sequence is MVERARRLGRWFLALDSLLVILGFFVVMPMISLRFVDQQGWAAGIVGLALGLRQLTQQGLGVLGGSLADKFGARPLIVGGMLLRAAGFASLAYAQSGLELILSCIISGLGGCLFDPPRAALVIKFTRPRQRGRYISLLMMLESAGAVVGALLGSWLLNFDFEYVCLLGAGLFVCAALCNLLILPPYKLSQRPTPIRAGLGQVLADKAFCRLVLILSGYYALWVQVMLIFPILVKQMAGTTTAVGWMYTLETAISLTLLYPLARYGEKHFKLENRLMAGVLLMTTGIGLVAFATTLPAVFVLLACFYLGIVIAEPARETLMTKLAQPGARGSYMGFSRLGLALGGMTGYVGGGALHDYANAQGQPWLPWLVLGTVGVTTLLLLVNCFHREPSLARVNI.

Transmembrane regions (helical) follow at residues 11-31 (WFLA…MPMI), 71-91 (FGAR…FASL), 94-114 (AQSG…GCLF), 137-157 (LLMM…SWLL), 163-183 (YVCL…LLIL), 211-231 (LVLI…IFPI), 242-262 (AVGW…YPLA), 291-311 (FATT…GIVI), 338-358 (LGLA…HDYA), and 366-386 (LPWL…VNCF).

It belongs to the major facilitator superfamily. DHA1 family. MdtH (TC 2.A.1.2.21) subfamily.

Its subcellular location is the cell inner membrane. This is Multidrug resistance protein MdtH from Aeromonas salmonicida (strain A449).